Reading from the N-terminus, the 367-residue chain is CCCH-type zinc finger protein moe-3 (367 aa).

A compositionally biased stretch (basic and acidic residues) spans 1–15 (MSKVKGDLEKSDKRP). Residues 1-57 (MSKVKGDLEKSDKRPPSSMSTGSADSGVFSSGVHASSPSHSQGSSSQSGPPSPTTQL) form a disordered region. Positions 30–49 (SSGVHASSPSHSQGSSSQSG) are enriched in low complexity. Residues 63-92 (ETANLIAVNEQLRKEIAENKQIQTNQMRAL) are a coiled coil. A disordered region spans residues 107-126 (SISPHHGFPQRPPRGERRMQ). 2 C3H1-type zinc fingers span residues 130–158 (SYKT…HGEE) and 172–200 (KYKT…HPDN). Residues 235–268 (NTRNSYNQQPPPMGGLEMQSSPMKSSSDSSHMRS) form a disordered region. A compositionally biased stretch (low complexity) spans 252–268 (MQSSPMKSSSDSSHMRS).

As to expression, exclusively expressed in the hermaphrodite gonad. Weakly distributed throughout gonadal oocytes from the mitotic stage to the developing diakinesis stage, with expression restricted to the distal region of the gonad.

In terms of biological role, zinc-finger protein that may play a role in oocyte maturation and fertility. The sequence is that of CCCH-type zinc finger protein moe-3 from Caenorhabditis elegans.